We begin with the raw amino-acid sequence, 267 residues long: 2-keto-3-deoxy-L-rhamnonate aldolase (267 aa).

The active-site Proton acceptor is histidine 49. Substrate is bound at residue glutamine 151. Residue glutamate 153 participates in Mg(2+) binding. Substrate-binding residues include alanine 178 and aspartate 179. Aspartate 179 is a Mg(2+) binding site.

Belongs to the HpcH/HpaI aldolase family. KDR aldolase subfamily. As to quaternary structure, homohexamer. It depends on Mg(2+) as a cofactor.

It carries out the reaction 2-dehydro-3-deoxy-L-rhamnonate = (S)-lactaldehyde + pyruvate. In terms of biological role, catalyzes the reversible retro-aldol cleavage of 2-keto-3-deoxy-L-rhamnonate (KDR) to pyruvate and lactaldehyde. The sequence is that of 2-keto-3-deoxy-L-rhamnonate aldolase from Escherichia coli (strain UTI89 / UPEC).